Here is a 368-residue protein sequence, read N- to C-terminus: Phospho-N-acetylmuramoyl-pentapeptide-transferase (368 aa).

A run of 9 helical transmembrane segments spans residues 23 to 43, 72 to 92, 94 to 114, 139 to 159, 170 to 190, 201 to 221, 238 to 258, 265 to 286, and 345 to 365; these read YITF…LVFG, IPTM…LLWA, IAEP…AVGF, VALG…SVLL, ITVD…TAVS, GLAA…AYLT, AGEV…FLWF, VFMG…ALLI, and KIVI…LLTL.

This sequence belongs to the glycosyltransferase 4 family. MraY subfamily. The cofactor is Mg(2+).

The protein localises to the cell inner membrane. It catalyses the reaction UDP-N-acetyl-alpha-D-muramoyl-L-alanyl-gamma-D-glutamyl-meso-2,6-diaminopimeloyl-D-alanyl-D-alanine + di-trans,octa-cis-undecaprenyl phosphate = di-trans,octa-cis-undecaprenyl diphospho-N-acetyl-alpha-D-muramoyl-L-alanyl-D-glutamyl-meso-2,6-diaminopimeloyl-D-alanyl-D-alanine + UMP. The protein operates within cell wall biogenesis; peptidoglycan biosynthesis. Functionally, catalyzes the initial step of the lipid cycle reactions in the biosynthesis of the cell wall peptidoglycan: transfers peptidoglycan precursor phospho-MurNAc-pentapeptide from UDP-MurNAc-pentapeptide onto the lipid carrier undecaprenyl phosphate, yielding undecaprenyl-pyrophosphoryl-MurNAc-pentapeptide, known as lipid I. The chain is Phospho-N-acetylmuramoyl-pentapeptide-transferase from Chloroherpeton thalassium (strain ATCC 35110 / GB-78).